Here is a 474-residue protein sequence, read N- to C-terminus: tRNA-2-methylthio-N(6)-dimethylallyladenosine synthase (474 aa).

Positions 3–120 (KKLHIKTWGC…LPDMIEQVRR (118 aa)) constitute an MTTase N-terminal domain. Residues cysteine 12, cysteine 49, cysteine 83, cysteine 157, cysteine 161, and cysteine 164 each coordinate [4Fe-4S] cluster. Positions 143 to 375 (RAEGPTAFVS…QDRITQQAMR (233 aa)) constitute a Radical SAM core domain. The region spanning 378 to 441 (RHMMGTVQRI…TNSLRGKFIR (64 aa)) is the TRAM domain.

This sequence belongs to the methylthiotransferase family. MiaB subfamily. Monomer. The cofactor is [4Fe-4S] cluster.

The protein resides in the cytoplasm. It catalyses the reaction N(6)-dimethylallyladenosine(37) in tRNA + (sulfur carrier)-SH + AH2 + 2 S-adenosyl-L-methionine = 2-methylsulfanyl-N(6)-dimethylallyladenosine(37) in tRNA + (sulfur carrier)-H + 5'-deoxyadenosine + L-methionine + A + S-adenosyl-L-homocysteine + 2 H(+). Catalyzes the methylthiolation of N6-(dimethylallyl)adenosine (i(6)A), leading to the formation of 2-methylthio-N6-(dimethylallyl)adenosine (ms(2)i(6)A) at position 37 in tRNAs that read codons beginning with uridine. The chain is tRNA-2-methylthio-N(6)-dimethylallyladenosine synthase from Shewanella putrefaciens (strain CN-32 / ATCC BAA-453).